A 601-amino-acid chain; its full sequence is Elongation factor 4 (601 aa).

The tr-type G domain occupies 5-187 (IRKKNFCIIA…AICKHVPSPR (183 aa)). GTP-binding positions include 17 to 22 (DHGKST) and 134 to 137 (NKID).

This sequence belongs to the TRAFAC class translation factor GTPase superfamily. Classic translation factor GTPase family. LepA subfamily.

The protein resides in the cell inner membrane. The enzyme catalyses GTP + H2O = GDP + phosphate + H(+). Its function is as follows. Required for accurate and efficient protein synthesis under certain stress conditions. May act as a fidelity factor of the translation reaction, by catalyzing a one-codon backward translocation of tRNAs on improperly translocated ribosomes. Back-translocation proceeds from a post-translocation (POST) complex to a pre-translocation (PRE) complex, thus giving elongation factor G a second chance to translocate the tRNAs correctly. Binds to ribosomes in a GTP-dependent manner. In Borrelia garinii subsp. bavariensis (strain ATCC BAA-2496 / DSM 23469 / PBi) (Borreliella bavariensis), this protein is Elongation factor 4.